The chain runs to 308 residues: GTPase Era (308 aa).

Positions 7–181 (RCGWVALIGP…LRLIVGYMPE (175 aa)) constitute an Era-type G domain. Positions 15 to 22 (GPPNAGKS) are G1. 15-22 (GPPNAGKS) lines the GTP pocket. Residues 41-45 (QTTRN) are G2. The segment at 62–65 (DTPG) is G3. Residues 62-66 (DTPGI) and 130-133 (NKID) each bind GTP. Residues 130 to 133 (NKID) form a G4 region. The G5 stretch occupies residues 160–162 (ASA). Residues 212 to 290 (LRQELPYSTA…HLELWVKVRE (79 aa)) form the KH type-2 domain.

It belongs to the TRAFAC class TrmE-Era-EngA-EngB-Septin-like GTPase superfamily. Era GTPase family. As to quaternary structure, monomer.

Its subcellular location is the cytoplasm. It is found in the cell inner membrane. Functionally, an essential GTPase that binds both GDP and GTP, with rapid nucleotide exchange. Plays a role in 16S rRNA processing and 30S ribosomal subunit biogenesis and possibly also in cell cycle regulation and energy metabolism. The protein is GTPase Era of Nitratidesulfovibrio vulgaris (strain DP4) (Desulfovibrio vulgaris).